We begin with the raw amino-acid sequence, 104 residues long: Large ribosomal subunit protein bL21 (104 aa).

The protein belongs to the bacterial ribosomal protein bL21 family. Part of the 50S ribosomal subunit. Contacts protein L20.

Functionally, this protein binds to 23S rRNA in the presence of protein L20. The polypeptide is Large ribosomal subunit protein bL21 (Tropheryma whipplei (strain TW08/27) (Whipple's bacillus)).